The primary structure comprises 616 residues: Dihydroxy-acid dehydratase (616 aa).

Aspartate 81 serves as a coordination point for Mg(2+). Cysteine 122 provides a ligand contact to [2Fe-2S] cluster. Mg(2+) is bound by residues aspartate 123 and lysine 124. Lysine 124 carries the post-translational modification N6-carboxylysine. Residue cysteine 195 coordinates [2Fe-2S] cluster. Glutamate 491 contacts Mg(2+). Catalysis depends on serine 517, which acts as the Proton acceptor.

Belongs to the IlvD/Edd family. Homodimer. The cofactor is [2Fe-2S] cluster. Mg(2+) serves as cofactor.

It catalyses the reaction (2R)-2,3-dihydroxy-3-methylbutanoate = 3-methyl-2-oxobutanoate + H2O. The catalysed reaction is (2R,3R)-2,3-dihydroxy-3-methylpentanoate = (S)-3-methyl-2-oxopentanoate + H2O. Its pathway is amino-acid biosynthesis; L-isoleucine biosynthesis; L-isoleucine from 2-oxobutanoate: step 3/4. It participates in amino-acid biosynthesis; L-valine biosynthesis; L-valine from pyruvate: step 3/4. Functions in the biosynthesis of branched-chain amino acids. Catalyzes the dehydration of (2R,3R)-2,3-dihydroxy-3-methylpentanoate (2,3-dihydroxy-3-methylvalerate) into 2-oxo-3-methylpentanoate (2-oxo-3-methylvalerate) and of (2R)-2,3-dihydroxy-3-methylbutanoate (2,3-dihydroxyisovalerate) into 2-oxo-3-methylbutanoate (2-oxoisovalerate), the penultimate precursor to L-isoleucine and L-valine, respectively. The polypeptide is Dihydroxy-acid dehydratase (Escherichia coli O7:K1 (strain IAI39 / ExPEC)).